A 209-amino-acid polypeptide reads, in one-letter code: Pyrrolidone-carboxylate peptidase (209 aa).

Active-site residues include Glu79, Cys142, and His164.

The protein belongs to the peptidase C15 family. As to quaternary structure, homotetramer.

It is found in the cytoplasm. The enzyme catalyses Release of an N-terminal pyroglutamyl group from a polypeptide, the second amino acid generally not being Pro.. Removes 5-oxoproline from various penultimate amino acid residues except L-proline. In Saccharolobus islandicus (strain Y.N.15.51 / Yellowstone #2) (Sulfolobus islandicus), this protein is Pyrrolidone-carboxylate peptidase.